The chain runs to 592 residues: MHVARLLPLLLLLGQQLRAASVTEPTLPTVVLAILARNAEHSLPHYLGALERLDYPRARLALWCATDHNMDNTTGMLREWLAAVGRDYATVVWKPEEEARSYPDEQGPKHWTKERHQFLMELRQEALAFARDWGADYILFADTDNILTNNQTLKLLIDRQLPVVAPMLDSQTYYSNFWCGITPQGYYRRTAEYFPTKNRQRQGCFRVPMVHSTFLLSLQTEETARLAFYPPHPNYSWPFDDIIVFAYACQAAGVSMHVCNDHRYGYMNVVVKPHQSLEEEKTNFIHLILEALVDGPPMLASAHVSRPPKKLSKMGFDEVFVISLARRPQRRARMLSSLWEMEISAQVVDAVDGRTLNSSILKHLGVDLLPGYQDPYSGHTLTKGEVGCFLSHYSIWEEVVARGLARVVVFEDDVRFKDNFRRRLERLMEDVLIQKLSWDLIYLGRKQVNPEEEVAVEGLPGLVVAGYSYWTLAYTLSLAGARKLLASQPLHRMLPVDEFLPVMFDRHPNDQYKAYFWPRDLQAFSARPLLASPTHYSGDAEWLSDTETSSPWDDDSGRLISQTGSQKALRGPHLHLTGSSGHSLHPHHRDEL.

The first 19 residues, 1 to 19, serve as a signal peptide directing secretion; sequence MHVARLLPLLLLLGQQLRA. Asparagine 72, asparagine 150, asparagine 234, and asparagine 357 each carry an N-linked (GlcNAc...) asparagine glycan. The tract at residues 540–592 is disordered; sequence AEWLSDTETSSPWDDDSGRLISQTGSQKALRGPHLHLTGSSGHSLHPHHRDEL. A Prevents secretion from ER motif is present at residues 589–592; it reads RDEL.

The protein belongs to the glycosyltransferase 25 family.

Its subcellular location is the endoplasmic reticulum lumen. Probable cell adhesion protein involved in leukocyte transmigration across the blood-brain barrier. Does not express any beta-galactosyltransferase activity in vitro. The sequence is that of Inactive glycosyltransferase 25 family member 3 (Cercam) from Mus musculus (Mouse).